We begin with the raw amino-acid sequence, 404 residues long: Argininosuccinate synthase (404 aa).

Residues 11–19 (AYSGGLDTS) and Ala38 contribute to the ATP site. The L-citrulline site is built by Tyr91 and Ser96. Residue Gly121 coordinates ATP. Positions 123, 127, and 128 each coordinate L-aspartate. Asn127 is an L-citrulline binding site. 5 residues coordinate L-citrulline: Arg131, Ser181, Ser190, Glu266, and Tyr278.

Belongs to the argininosuccinate synthase family. Type 1 subfamily. As to quaternary structure, homotetramer.

The protein resides in the cytoplasm. It catalyses the reaction L-citrulline + L-aspartate + ATP = 2-(N(omega)-L-arginino)succinate + AMP + diphosphate + H(+). Its pathway is amino-acid biosynthesis; L-arginine biosynthesis; L-arginine from L-ornithine and carbamoyl phosphate: step 2/3. The chain is Argininosuccinate synthase from Sulfurimonas denitrificans (strain ATCC 33889 / DSM 1251) (Thiomicrospira denitrificans (strain ATCC 33889 / DSM 1251)).